Consider the following 274-residue polypeptide: Large ribosomal subunit protein uL2cz/uL2cy (274 aa).

The tract at residues 225-274 is disordered; the sequence is PVDHPHGGGEGRAPIGRKKPVTPWGYPALGRRTRKRKKYSETLILRRRSK.

It belongs to the universal ribosomal protein uL2 family. In terms of assembly, part of the 50S ribosomal subunit.

It localises to the plastid. The protein localises to the chloroplast. The polypeptide is Large ribosomal subunit protein uL2cz/uL2cy (rpl2-A) (Crucihimalaya wallichii (Rock-cress)).